A 323-amino-acid chain; its full sequence is Calcium homeostasis modulator protein 2 (323 aa).

Topologically, residues 1–21 (MAALIAENFRFLSLFFKSKDV) are cytoplasmic. The segment at 14 to 39 (LFFKSKDVMIFNGLVALGTVGSQELF) is central pore. Residues 22–43 (MIFNGLVALGTVGSQELFSVVA) traverse the membrane as a helical segment. Topologically, residues 44 to 52 (FHCPCSPAR) are extracellular. Intrachain disulfides connect cysteine 46–cysteine 130 and cysteine 48–cysteine 162. The helical transmembrane segment at 53-76 (NYLYGLTAIGVPALALFLIGVILN) threads the bilayer. The Cytoplasmic segment spans residues 77-101 (NHTWNLVAECQYRRAKNCSAAPNFL). The helical transmembrane segment at 102–132 (LLSSILGRAAVAPVTWSVISLLRGEAYVCAL) threads the bilayer. Residues 133–179 (SEFVDPSSLTAGDKGFPPAHATEVLARFPCGEGPANLSSFREEVSRR) are Extracellular-facing. Positions 145–152 (DKGFPPAH) are hemichannel docking. The chain crosses the membrane as a helical span at residues 180-206 (LKYESQLFGWLLIGVVAILVFLTKCLK). Topologically, residues 207 to 323 (HYCSPLSYRQ…DNVEMALLTA (117 aa)) are cytoplasmic. Residues 214 to 251 (YRQEAYWAQYRTNEDQLFQRTAEVHSRVLAANNVRRFF) are intersubunit interaction.

Belongs to the CALHM family. As to quaternary structure, homo-undecamer. Two undecameric hemichannels can assemble in a head-to-head manner to form a gap junction. As to expression, neuron, astrocyte, and microglia.

The protein resides in the cell membrane. It catalyses the reaction ATP(in) = ATP(out). Its activity is regulated as follows. Inhibited by divalent cations such as Co(2+) and Ni(2+). Functionally, pore-forming subunit of Ca(2+) homeostasis modulator channels. Mediates ATP release from astrocytes and ATP-induced Ca(2+) influx in microglia thus regulating neuronal ATP and Ca(2+) homeostasis, synaptic transmission and neuroinflammatory response. May form intercellular gap junctions. The gating mechanism remains unknown. This Mus musculus (Mouse) protein is Calcium homeostasis modulator protein 2.